Here is an 89-residue protein sequence, read N- to C-terminus: Small ribosomal subunit protein uS19 (89 aa).

It belongs to the universal ribosomal protein uS19 family.

Its function is as follows. Protein S19 forms a complex with S13 that binds strongly to the 16S ribosomal RNA. This Xanthomonas campestris pv. campestris (strain 8004) protein is Small ribosomal subunit protein uS19.